Here is a 101-residue protein sequence, read N- to C-terminus: NAD(P)H-quinone oxidoreductase subunit 4L, chloroplastic (101 aa).

Helical transmembrane passes span 2–22 (MFEH…YGLI), 32–52 (ICLE…SDLF), and 61–81 (IFAI…LSIL).

This sequence belongs to the complex I subunit 4L family. NDH is composed of at least 16 different subunits, 5 of which are encoded in the nucleus.

It localises to the plastid. The protein resides in the chloroplast thylakoid membrane. It catalyses the reaction a plastoquinone + NADH + (n+1) H(+)(in) = a plastoquinol + NAD(+) + n H(+)(out). The catalysed reaction is a plastoquinone + NADPH + (n+1) H(+)(in) = a plastoquinol + NADP(+) + n H(+)(out). In terms of biological role, NDH shuttles electrons from NAD(P)H:plastoquinone, via FMN and iron-sulfur (Fe-S) centers, to quinones in the photosynthetic chain and possibly in a chloroplast respiratory chain. The immediate electron acceptor for the enzyme in this species is believed to be plastoquinone. Couples the redox reaction to proton translocation, and thus conserves the redox energy in a proton gradient. This Agrostis stolonifera (Creeping bentgrass) protein is NAD(P)H-quinone oxidoreductase subunit 4L, chloroplastic.